A 373-amino-acid polypeptide reads, in one-letter code: Tomoregulin-1 (373 aa).

The signal sequence occupies residues M1 to A36. Residues S37 to V323 lie on the Extracellular side of the membrane. N56 carries an N-linked (GlcNAc...) asparagine glycan. The 48-residue stretch at A91 to S138 folds into the Kazal-like 1 domain. 3 disulfide bridges follow: C92/C122, C96/C115, and C104/C136. N140 is a glycosylation site (N-linked (GlcNAc...) asparagine). A disordered region spans residues N140–K162. The 49-residue stretch at V182–D230 folds into the Kazal-like 2 domain. Intrachain disulfides connect C183-C214, C187-C207, C196-C228, C268-C281, C276-C292, and C294-C303. One can recognise an EGF-like domain in the interval S264–E304. A helical transmembrane segment spans residues L324–I344. Residues T345–V373 are Cytoplasmic-facing. Residues N352–V373 form a disordered region. Residues Q359 to V373 are compositionally biased toward polar residues.

It belongs to the tomoregulin family. May interact with ST14.

It is found in the cell membrane. Neuron-specific restriction factor that prevents herpes simplex virus 1 (HHV-1) infection in the brain by blocking viral entry. Also able to restrict herpes simplex virus 2 (HHV-2) infection, although to a lesser extent. Acts by preventing the association between the viral glycoprotein D (gD) and its cell surface receptor NECTIN1, thereby inhibiting fusion of the virus and the cell membrane. Also able to prevent the association between the viral glycoprotein B (gB) and MYH9/NMMHC-IIA and MYH10/NMMHC-IIB receptors. The chain is Tomoregulin-1 (Tmeff1) from Rattus norvegicus (Rat).